We begin with the raw amino-acid sequence, 110 residues long: Tyrosine-protein phosphatase 3 (110 aa).

Positions 1-110 (QKCATIVMVT…NPPHSGPIVV (110 aa)) constitute a Tyrosine-protein phosphatase domain. D80 serves as a coordination point for substrate.

Belongs to the protein-tyrosine phosphatase family.

The catalysed reaction is O-phospho-L-tyrosyl-[protein] + H2O = L-tyrosyl-[protein] + phosphate. This chain is Tyrosine-protein phosphatase 3 (STY-3), found in Styela plicata (Wrinkled sea squirt).